A 477-amino-acid polypeptide reads, in one-letter code: Pup--protein ligase (477 aa).

Glu16 is a binding site for Mg(2+). ATP is bound at residue Arg60. Tyr62 serves as a coordination point for Mg(2+). Asp64 acts as the Proton acceptor in catalysis. Mg(2+) is bound at residue Glu70. ATP-binding residues include Thr73 and Trp441.

Belongs to the Pup ligase/Pup deamidase family. Pup-conjugating enzyme subfamily.

It carries out the reaction ATP + [prokaryotic ubiquitin-like protein]-L-glutamate + [protein]-L-lysine = ADP + phosphate + N(6)-([prokaryotic ubiquitin-like protein]-gamma-L-glutamyl)-[protein]-L-lysine.. The protein operates within protein degradation; proteasomal Pup-dependent pathway. It participates in protein modification; protein pupylation. Catalyzes the covalent attachment of the prokaryotic ubiquitin-like protein modifier Pup to the proteasomal substrate proteins, thereby targeting them for proteasomal degradation. This tagging system is termed pupylation. The ligation reaction involves the side-chain carboxylate of the C-terminal glutamate of Pup and the side-chain amino group of a substrate lysine. The protein is Pup--protein ligase of Corynebacterium kroppenstedtii (strain DSM 44385 / JCM 11950 / CIP 105744 / CCUG 35717).